Consider the following 364-residue polypeptide: Aminomethyltransferase (364 aa).

This sequence belongs to the GcvT family. In terms of assembly, the glycine cleavage system is composed of four proteins: P, T, L and H.

It carries out the reaction N(6)-[(R)-S(8)-aminomethyldihydrolipoyl]-L-lysyl-[protein] + (6S)-5,6,7,8-tetrahydrofolate = N(6)-[(R)-dihydrolipoyl]-L-lysyl-[protein] + (6R)-5,10-methylene-5,6,7,8-tetrahydrofolate + NH4(+). The glycine cleavage system catalyzes the degradation of glycine. This is Aminomethyltransferase from Escherichia coli O81 (strain ED1a).